We begin with the raw amino-acid sequence, 465 residues long: Ribulose bisphosphate carboxylase large chain (465 aa).

K4 is modified (N6,N6,N6-trimethyllysine). Substrate is bound by residues N113 and T163. K165 (proton acceptor) is an active-site residue. K167 contacts substrate. Mg(2+) contacts are provided by K191, D193, and E194. N6-carboxylysine is present on K191. H284 functions as the Proton acceptor in the catalytic mechanism. Substrate contacts are provided by R285, H317, and S369.

The protein belongs to the RuBisCO large chain family. Type I subfamily. Heterohexadecamer of 8 large chains and 8 small chains; disulfide-linked. The disulfide link is formed within the large subunit homodimers. Mg(2+) is required as a cofactor. Post-translationally, the disulfide bond which can form in the large chain dimeric partners within the hexadecamer appears to be associated with oxidative stress and protein turnover.

The protein localises to the plastid. The protein resides in the chloroplast. It carries out the reaction 2 (2R)-3-phosphoglycerate + 2 H(+) = D-ribulose 1,5-bisphosphate + CO2 + H2O. It catalyses the reaction D-ribulose 1,5-bisphosphate + O2 = 2-phosphoglycolate + (2R)-3-phosphoglycerate + 2 H(+). In terms of biological role, ruBisCO catalyzes two reactions: the carboxylation of D-ribulose 1,5-bisphosphate, the primary event in carbon dioxide fixation, as well as the oxidative fragmentation of the pentose substrate in the photorespiration process. Both reactions occur simultaneously and in competition at the same active site. The sequence is that of Ribulose bisphosphate carboxylase large chain from Humiria balsamifera (Tauroniro).